The sequence spans 1486 residues: Chromosome partition protein MukB (1486 aa).

Residue 34 to 41 participates in ATP binding; that stretch reads GGNGAGKS. Coiled coils occupy residues 326-418, 444-480, and 509-603; these read LEAD…QYNQ, LETF…QAYQ, and RHLA…RAPV. The flexible hinge stretch occupies residues 666–783; the sequence is PGGSEDQRLN…EVPLFGRAAR (118 aa). Coiled coils occupy residues 835–923, 977–1115, and 1209–1266; these read EAEI…AKLE, EMLS…TAKA, and VEAI…QNVS.

The protein belongs to the SMC family. MukB subfamily. As to quaternary structure, homodimerization via its hinge domain. Binds to DNA via its C-terminal region. Interacts, and probably forms a ternary complex, with MukE and MukF via its C-terminal region. The complex formation is stimulated by calcium or magnesium. Interacts with tubulin-related protein FtsZ.

The protein resides in the cytoplasm. The protein localises to the nucleoid. In terms of biological role, plays a central role in chromosome condensation, segregation and cell cycle progression. Functions as a homodimer, which is essential for chromosome partition. Involved in negative DNA supercoiling in vivo, and by this means organize and compact chromosomes. May achieve or facilitate chromosome segregation by condensation DNA from both sides of a centrally located replisome during cell division. The polypeptide is Chromosome partition protein MukB (Escherichia coli O81 (strain ED1a)).